Consider the following 1402-residue polypeptide: Transcription factor SPT20 homolog (1402 aa).

7 disordered regions span residues 1-29, 60-107, 114-133, 177-206, 786-817, 1136-1174, and 1199-1250; these read MNGN…EQEQ, VNSL…LDTD, NNDS…SSSS, QTTL…NNIL, APST…PTPV, PQQI…QYQT, and QPLQ…PPQI. Over residues 7 to 29 the composition is skewed to basic and acidic residues; sequence VHTEENKNEHQQEGKGGEQEQEQ. A compositionally biased stretch (polar residues) spans 60–72; sequence VNSLSEPTPNEQQ. Residues 73 to 102 are compositionally biased toward low complexity; sequence NNNNNNNSNGNGNGNDETTSSKTTTIINSN. Low complexity-rich tracts occupy residues 183-204, 786-812, 1136-1150, 1157-1174, 1199-1218, and 1226-1250; these read NNNN…NNNN, APST…TTPT, PQQI…PPNQ, SPQS…QYQT, QPLQ…QQQQ, and PQQF…PPQI.

Belongs to the SPT20 family.

The protein is Transcription factor SPT20 homolog of Dictyostelium discoideum (Social amoeba).